Reading from the N-terminus, the 628-residue chain is Kinesin-like protein subito (628 aa).

Positions 28–68 (RFRPRPNKKMRLFDNIQESEEESFSEYSDTESEYKYQSSEA) are disordered. Residues 44-58 (QESEEESFSEYSDTE) are compositionally biased toward acidic residues. Positions 87 to 479 (GPQVFLRLRP…LNFASIAKNI (393 aa)) constitute a Kinesin motor domain. 169-176 (GTSGSGKT) serves as a coordination point for ATP. The stretch at 509-612 (DYTKELEDEN…KNPASDTDIS (104 aa)) forms a coiled coil. Residues 596-628 (KDEIEELKNPASDTDISDDPNESKSPIEILDDD) are disordered. Position 607 is a phosphoserine (serine 607). Threonine 609 is modified (phosphothreonine). A Phosphoserine modification is found at serine 612.

The protein belongs to the TRAFAC class myosin-kinesin ATPase superfamily. Kinesin family.

Its subcellular location is the cytoplasm. The protein localises to the cytoskeleton. Its function is as follows. Required during female meiosis for bipolar spindle formation in the absence of the centrosomes and chromosome homolog segregation. Also has roles in male meiosis and mitotic divisions of the early embryo. This is Kinesin-like protein subito (sub) from Drosophila melanogaster (Fruit fly).